The following is a 661-amino-acid chain: tRNA uridine 5-carboxymethylaminomethyl modification enzyme MnmG (661 aa).

FAD is bound at residue 13–18 (GGGHAG). Position 285 to 299 (285 to 299 (GPRYCPSVEDKINRF)) interacts with NAD(+).

This sequence belongs to the MnmG family. In terms of assembly, homodimer. Heterotetramer of two MnmE and two MnmG subunits. It depends on FAD as a cofactor.

It is found in the cytoplasm. In terms of biological role, NAD-binding protein involved in the addition of a carboxymethylaminomethyl (cmnm) group at the wobble position (U34) of certain tRNAs, forming tRNA-cmnm(5)s(2)U34. The polypeptide is tRNA uridine 5-carboxymethylaminomethyl modification enzyme MnmG (Acidovorax sp. (strain JS42)).